The chain runs to 202 residues: Energy-coupling factor transporter transmembrane protein BioN (202 aa).

Helical transmembrane passes span 21–40 (LLSL…LLLL), 44–63 (VLVA…EALL), and 68–90 (IFLT…AALV).

Belongs to the CbiQ family. Part of a biotin transporter complex composed of BioM, BioN and BioY.

It localises to the cell inner membrane. Involved in biotin uptake. The protein is Energy-coupling factor transporter transmembrane protein BioN (bioN) of Rhizobium etli (strain ATCC 51251 / DSM 11541 / JCM 21823 / NBRC 15573 / CFN 42).